The following is a 262-amino-acid chain: ATP synthase subunit a 1 (262 aa).

The next 5 helical transmembrane spans lie at 30 to 50, 91 to 111, 131 to 151, 201 to 221, and 232 to 252; these read TVHI…ILVF, IAPL…MDLI, IVPT…FALM, LFGN…LMPW, and AIFH…LTIV.

Belongs to the ATPase A chain family. As to quaternary structure, F-type ATPases have 2 components, CF(1) - the catalytic core - and CF(0) - the membrane proton channel. CF(1) has five subunits: alpha(3), beta(3), gamma(1), delta(1), epsilon(1). CF(0) has three main subunits: a(1), b(2) and c(9-12). The alpha and beta chains form an alternating ring which encloses part of the gamma chain. CF(1) is attached to CF(0) by a central stalk formed by the gamma and epsilon chains, while a peripheral stalk is formed by the delta and b chains.

The protein localises to the cell inner membrane. Its function is as follows. Key component of the proton channel; it plays a direct role in the translocation of protons across the membrane. This chain is ATP synthase subunit a 1, found in Photobacterium profundum (strain SS9).